The following is a 953-amino-acid chain: Translation initiation factor IF-2 (953 aa).

2 disordered regions span residues 52–247 (KASK…LAEL) and 279–363 (TKLK…TERK). Basic and acidic residues-rich tracts occupy residues 80–89 (TGSEHVEKTQ), 98–111 (FKAE…EQAA), and 140–188 (QGDK…ENHK). Residues 191–207 (RFTNQKKQGRQEPQSKS) are compositionally biased toward polar residues. Residues 229-247 (RQSETRFRAQQEAKRLAEL) show a composition bias toward basic and acidic residues. The span at 282–291 (KSSNISAKST) shows a compositional bias: polar residues. Basic and acidic residues predominate over residues 300–317 (ARPEKNRELTHHSQEGQK). Residues 322 to 338 (SWNSQNQVRNQKNSNWN) show a composition bias toward low complexity. The span at 339–348 (KNKKTKKGKN) shows a compositional bias: basic residues. Residues 454–623 (ERAPVVTIMG…LLVAEVEELK (170 aa)) form the tr-type G domain. The interval 463-470 (GHVDHGKT) is G1. 463–470 (GHVDHGKT) contributes to the GTP binding site. The G2 stretch occupies residues 488–492 (GITQH). A G3 region spans residues 509 to 512 (DTPG). GTP contacts are provided by residues 509 to 513 (DTPGH) and 563 to 566 (NKID). The interval 563–566 (NKID) is G4. The tract at residues 599–601 (SAK) is G5.

The protein belongs to the TRAFAC class translation factor GTPase superfamily. Classic translation factor GTPase family. IF-2 subfamily.

Its subcellular location is the cytoplasm. In terms of biological role, one of the essential components for the initiation of protein synthesis. Protects formylmethionyl-tRNA from spontaneous hydrolysis and promotes its binding to the 30S ribosomal subunits. Also involved in the hydrolysis of GTP during the formation of the 70S ribosomal complex. This chain is Translation initiation factor IF-2, found in Streptococcus pyogenes serotype M5 (strain Manfredo).